The sequence spans 266 residues: MATTKTSIATLQKMKREGTKISSLTAYDSSFAKLMTEQGVDFILVGDSLGNVVQGRDSTVPVTVDDMIYHTQCVRRGASNAFVIADMPFMTYSTPEQAYDVAAALMQAGANMVKLEGGHWLVETIEGLKTRGIPVCAHLGLLPQSVNVLGGYKVQGKEQQQADDTLNQALALEQAGAQLLVLECVPASLGKRITEQLSIPTIGIGAGADTDGQILVMHDMLGMNSDYLPKFAKDFLAQGGSLADAFRLYSEQVRSGEFPTAEHSYK.

D47 and D86 together coordinate Mg(2+). Residues 47-48 (DS), D86, and K114 each bind 3-methyl-2-oxobutanoate. E116 contacts Mg(2+). E183 acts as the Proton acceptor in catalysis.

The protein belongs to the PanB family. As to quaternary structure, homodecamer; pentamer of dimers. Mg(2+) serves as cofactor.

It localises to the cytoplasm. The catalysed reaction is 3-methyl-2-oxobutanoate + (6R)-5,10-methylene-5,6,7,8-tetrahydrofolate + H2O = 2-dehydropantoate + (6S)-5,6,7,8-tetrahydrofolate. The protein operates within cofactor biosynthesis; (R)-pantothenate biosynthesis; (R)-pantoate from 3-methyl-2-oxobutanoate: step 1/2. Its function is as follows. Catalyzes the reversible reaction in which hydroxymethyl group from 5,10-methylenetetrahydrofolate is transferred onto alpha-ketoisovalerate to form ketopantoate. The polypeptide is 3-methyl-2-oxobutanoate hydroxymethyltransferase (Idiomarina loihiensis (strain ATCC BAA-735 / DSM 15497 / L2-TR)).